The following is a 357-amino-acid chain: MASLTDLVNLDLSDCTDKIIAEYIWVGGSGIDLRSKARTVKGPITDPSQLPKWNYDGSSTGQAPGEDSEVILYPQAIFKDPFRKGNNILVMCDCYTPQGEPIPSNKRYKAATVFSHPDVAAEVPWYGIEQEYTLLQKDLSWPLGWPVGGYPGPQGPYYCAAGADKAFGRDVVDAHYKACLYAGINISGINGEVMPGQWEFQVGPSVGISAGDEIWVARYILERITEMAGIVLSLDPKPIKGDWNGAGAHTNYSTKSMREAGGYEVIKEAIEKLGRRHREHIAAYGEGNERRLTGRHETADINTFKWGVANRGASIRVGRDTEKEGKGYFEDRRPASNMDPYVVTGMIADTTILWKGN.

The GS beta-grasp domain maps to 19-99; sequence IIAEYIWVGG…VMCDCYTPQG (81 aa). Positions 106-357 constitute a GS catalytic domain; sequence KRYKAATVFS…ADTTILWKGN (252 aa).

This sequence belongs to the glutamine synthetase family. In terms of assembly, homooctamer. As to expression, found mainly in the cortical tissues of seedling roots, stem and seedling shoot.

The protein localises to the cytoplasm. It catalyses the reaction L-glutamate + NH4(+) + ATP = L-glutamine + ADP + phosphate + H(+). Functionally, plays a role in the flow of nitrogen into nitrogenous organic compounds. The protein is Glutamine synthetase root isozyme 5 (GS1-5) of Zea mays (Maize).